A 1097-amino-acid chain; its full sequence is RecBCD enzyme subunit RecC (1097 aa).

This sequence belongs to the RecC family. As to quaternary structure, heterotrimer of RecB, RecC and RecD. All subunits contribute to DNA-binding.

A helicase/nuclease that prepares dsDNA breaks (DSB) for recombinational DNA repair. Binds to DSBs and unwinds DNA via a highly rapid and processive ATP-dependent bidirectional helicase activity. Holoenzyme degrades any linearized DNA that is unable to undergo homologous recombination. In the holoenzyme this subunit recognizes the wild-type Chi sequence, and when added to isolated RecB increases its ATP-dependent helicase processivity. Unlike the case in E.coli, suppresses RecA-dependent homologous recombination, is instead required for single-strand annealing pathway repair of DSB. In Mycobacterium tuberculosis (strain ATCC 25618 / H37Rv), this protein is RecBCD enzyme subunit RecC.